Reading from the N-terminus, the 244-residue chain is MTDLVYEQPLNEKIRSYLRLEYLSKQLCNNLNNDHQHRCFYPLFSLCELSERCDYRNEVLKDIERNLLQLSKWQELEHIDSKQITFYIEALTQARESLQRPERCGNQLKQDRFLSALRQRFGMPGACCNFDLPQLHFWLAKPWDERRQDYQAWVSHFEPLLTPIALLLQLTRSTADYAKATAHAGFYQGDSTQALSLVRVKVDAAHGCYPTISGHKNRFAIHFVQFDQQRHSDRSIEFLLATCA.

Belongs to the ZapD family. As to quaternary structure, interacts with FtsZ.

Its subcellular location is the cytoplasm. Cell division factor that enhances FtsZ-ring assembly. Directly interacts with FtsZ and promotes bundling of FtsZ protofilaments, with a reduction in FtsZ GTPase activity. The protein is Cell division protein ZapD of Shewanella oneidensis (strain ATCC 700550 / JCM 31522 / CIP 106686 / LMG 19005 / NCIMB 14063 / MR-1).